A 78-amino-acid chain; its full sequence is Conotoxin CaFr179 (78 aa).

The first 19 residues, 1-19 (MSGLGIMVLTLLLLVFMEA), serve as a signal peptide directing secretion. A propeptide spanning residues 20–44 (SHQDAGEKQATQRDAINVRRRRSLA) is cleaved from the precursor. Disulfide bonds link C52-C64, C56-C72, and C63-C76. F77 bears the Phenylalanine amide mark.

The protein belongs to the conotoxin O3 superfamily. In terms of tissue distribution, expressed by the venom duct.

The protein resides in the secreted. The protein is Conotoxin CaFr179 of Conus caracteristicus (Characteristic cone).